Here is a 657-residue protein sequence, read N- to C-terminus: ER degradation-enhancing alpha-mannosidase-like protein 1 (657 aa).

Topologically, residues 1 to 4 (MQWR) are cytoplasmic. Residues 5 to 25 (ALVLGLVLLRLGLHGVLWLVF) traverse the membrane as a helical; Signal-anchor for type II membrane protein segment. Topologically, residues 26–657 (GLGPSMGFYQ…RQIDQMVGLI (632 aa)) are lumenal. The segment at 48–94 (SPDGPASPTSGPVGRPGGVSGPSWLQPPGTGAAQSPRKAPRRPGPGM) is disordered. N181, N198, N299, N342, and N624 each carry an N-linked (GlcNAc...) asparagine glycan.

This sequence belongs to the glycosyl hydrolase 47 family. As to quaternary structure, interacts with DNAJC10. Interacts with DERL2 and DERL3. Binds to SEL1L.

It localises to the endoplasmic reticulum membrane. Functionally, extracts misfolded glycoproteins, but not glycoproteins undergoing productive folding, from the calnexin cycle. It is directly involved in endoplasmic reticulum-associated degradation (ERAD) and targets misfolded glycoproteins for degradation in an N-glycan-independent manner, probably by forming a complex with SEL1L. It has low mannosidase activity, catalyzing mannose trimming from Man8GlcNAc2 to Man7GlcNAc2. The chain is ER degradation-enhancing alpha-mannosidase-like protein 1 (EDEM1) from Homo sapiens (Human).